The sequence spans 488 residues: Protein nucleotidyltransferase YdiU (488 aa).

ATP-binding residues include G91, G93, R94, K114, D126, G127, R177, and R184. D253 functions as the Proton acceptor in the catalytic mechanism. N254 and D263 together coordinate Mg(2+). D263 is an ATP binding site.

The protein belongs to the SELO family. Requires Mg(2+) as cofactor. Mn(2+) serves as cofactor.

It carries out the reaction L-seryl-[protein] + ATP = 3-O-(5'-adenylyl)-L-seryl-[protein] + diphosphate. The catalysed reaction is L-threonyl-[protein] + ATP = 3-O-(5'-adenylyl)-L-threonyl-[protein] + diphosphate. It catalyses the reaction L-tyrosyl-[protein] + ATP = O-(5'-adenylyl)-L-tyrosyl-[protein] + diphosphate. The enzyme catalyses L-histidyl-[protein] + UTP = N(tele)-(5'-uridylyl)-L-histidyl-[protein] + diphosphate. It carries out the reaction L-seryl-[protein] + UTP = O-(5'-uridylyl)-L-seryl-[protein] + diphosphate. The catalysed reaction is L-tyrosyl-[protein] + UTP = O-(5'-uridylyl)-L-tyrosyl-[protein] + diphosphate. Functionally, nucleotidyltransferase involved in the post-translational modification of proteins. It can catalyze the addition of adenosine monophosphate (AMP) or uridine monophosphate (UMP) to a protein, resulting in modifications known as AMPylation and UMPylation. This is Protein nucleotidyltransferase YdiU from Bacillus thuringiensis (strain Al Hakam).